The sequence spans 645 residues: Translation factor GUF1 homolog, mitochondrial (645 aa).

Positions 40–215 (DKIRNFGIVA…AIIDRVPAPT (176 aa)) constitute a tr-type G domain. GTP is bound by residues 49–56 (AHVDHGKS), 108–112 (DTPGH), and 162–165 (NKID).

It belongs to the TRAFAC class translation factor GTPase superfamily. Classic translation factor GTPase family. LepA subfamily.

The protein localises to the mitochondrion inner membrane. The catalysed reaction is GTP + H2O = GDP + phosphate + H(+). Its function is as follows. Promotes mitochondrial protein synthesis. May act as a fidelity factor of the translation reaction, by catalyzing a one-codon backward translocation of tRNAs on improperly translocated ribosomes. Binds to mitochondrial ribosomes in a GTP-dependent manner. The polypeptide is Translation factor GUF1 homolog, mitochondrial (Caenorhabditis elegans).